The primary structure comprises 450 residues: MTKHYDYIAIGGGSGGIASINRAAMYGQKCALIEAKELGGTCVNVGCVPKKVMWHAAQIREAIHMYGPDYGFDTTINKFNWETLIASRTAYIDRIHTSYENVLGKNNVDVIKGFARFVDAKTLEVNGETITADHILIATGGRPSHPDIPGVEYGIDSDGFFALPALPERVAVVGAGYIAVELAGVINGLGAKTHLFVRKHAPLRSFDPMISETLVEVMNAEGPQLHTNAIPKAVVKNTDGSLTLELEDGRSETVDCLIWAIGREPANDNINLEAAGVKTNEKGYIVVDKYQNTNIEGIYAVGDNTGAVELTPVAVAAGRRLSERLFNNKPDEHLDYSNIPTVVFSHPPIGTVGLTEPQAREQYGDDQVKVYKSSFTAMYTAVTTHRQPCRMKLVCVGSEEKIVGIHGIGFGMDEMLQGFAVALKMGATKKDFDNTVAIHPTAAEEFVTMR.

FAD is bound by residues serine 14, glycine 15, glutamate 34, threonine 41, cysteine 42, and lysine 50. A glutathione-binding site is contributed by serine 14. A disulfide bridge links cysteine 42 with cysteine 47. Tyrosine 99 contacts glutathione. Alanine 115 is an FAD binding site. Residues alanine 175, isoleucine 178, glutamate 181, arginine 198, arginine 204, and glycine 262 each contribute to the NADP(+) site. Aspartate 303 is an FAD binding site. Glutamate 309 lines the NADP(+) pocket. Threonine 311 contributes to the FAD binding site. Arginine 319 contributes to the glutathione binding site. Valine 342 lines the NADP(+) pocket. An FAD-binding site is contributed by histidine 439. Residue histidine 439 is the Proton acceptor of the active site.

Belongs to the class-I pyridine nucleotide-disulfide oxidoreductase family. As to quaternary structure, homodimer. FAD is required as a cofactor.

It is found in the cytoplasm. It catalyses the reaction 2 glutathione + NADP(+) = glutathione disulfide + NADPH + H(+). In terms of biological role, catalyzes the reduction of glutathione disulfide (GSSG) to reduced glutathione (GSH). Constitutes the major mechanism to maintain a high GSH:GSSG ratio in the cytosol. The chain is Glutathione reductase (gor) from Escherichia coli (strain K12).